The primary structure comprises 1003 residues: MPGKLRVHELAKQLGITSKELLATLKDKGEFVKTASSTIEPPVVKRMQEHYGSSGSDKSDTAAKPAAAKPAAPKPAASAAPKPGAPAKPAAPAAKPAPAAASAAKPGAAPKPGVQAKPAAAAKPGAPAKPAAPSAAKPGSAPKPAAAAKPAFSGPTPGDAAKKAEPAAKPGAEAPRPDGMPRPMGKPAPKPGARAPRVANNPFSTGGGERPAPRPGGGPRPGGGPRPGGGPRPQGQGRPGGQRDGQRDGQRDGQGNRGGQRQGAGAGGPRPQGGPRPQGGSRPQGGSAQGGSAKGAQGAPSQERQGGGRRPSPAMMPPTPGQMPAKAPGKGGRGGQAGGGAGGGFNRGGGTGGGAGRGGRRGGTAGAFGRPGGAPRRGRKSKRQKRNEYESMQAPNVIGGVRLPDGKGATIRLARGASLADFADKIGADAAALVQALFNLGEMVTATASVSDETLQLLGEEMNYKVQVVSPEDEDRELLESFDLQFGEDEGGEADLAKRPPVVTVMGHVDHGKTRLLDTIRKANVGSDEAGGITQGIGAYQVKVNVEDTERTITFLDTPGHEAFTAMRARGAKSTDIAVLVVAADDGVMPQTVEAINHAKAADVPIVVAVNKIDKPEASPEKIRGQLTEYGLIPEEYGGDTIFVDISAKQGLNIDELLASVCLTADAELDLVANPEMDAQGVAIEAHLDRGRGPVATVIVQRGTLRVGDSIVAGDTYGRVRRMVDEYGRDVEEAGPSRPVQVQGLNGVPGAGDNLLVVEDDRIARQIANQRNARKRNALAARSRKRVSLEDLDSVLKEHSTLNLILKGDNAGSVEALEEALLKIEMDDEVQLNIIDRGVGAVTQTNVTLAAASDAVIIAFNVRAEGKATEEANAEGVDVRYYTIIYRAIEEVEAALKGMLKPIYEERVIGHAEIRAIFKASSVGLIAGCMVEDGKVRRNATVRITRDGNVIAENAKIVSLRREKDDATEVSAGYECGMVLSYPDISVDDKIEVYEMVEVPREA.

Residues serine 36 to methionine 392 are disordered. Residues alanine 62–alanine 151 are compositionally biased toward low complexity. Composition is skewed to pro residues over residues aspartate 178–lysine 190 and proline 213–glycine 230. Composition is skewed to gly residues over residues proline 231–arginine 243 and glycine 255–proline 271. Low complexity predominate over residues glycine 273–glycine 286. The segment covering glycine 329–glycine 372 has biased composition (gly residues). Over residues arginine 376 to lysine 385 the composition is skewed to basic residues. The region spanning lysine 498 to aspartate 670 is the tr-type G domain. Residues glycine 507–threonine 514 are G1. Residue glycine 507–threonine 514 participates in GTP binding. Residues glycine 532–glycine 536 form a G2 region. The interval aspartate 557–glycine 560 is G3. GTP-binding positions include aspartate 557–histidine 561 and asparagine 611–aspartate 614. The G4 stretch occupies residues asparagine 611–aspartate 614. The interval serine 647–lysine 649 is G5.

This sequence belongs to the TRAFAC class translation factor GTPase superfamily. Classic translation factor GTPase family. IF-2 subfamily.

The protein localises to the cytoplasm. Functionally, one of the essential components for the initiation of protein synthesis. Protects formylmethionyl-tRNA from spontaneous hydrolysis and promotes its binding to the 30S ribosomal subunits. Also involved in the hydrolysis of GTP during the formation of the 70S ribosomal complex. The polypeptide is Translation initiation factor IF-2 (Corynebacterium glutamicum (strain R)).